The primary structure comprises 1201 residues: Putative disease resistance protein At4g19050 (1201 aa).

Residue 33 to 40 coordinates ATP; sequence GEAGIGKT. 14 LRR repeats span residues 469 to 491, 492 to 514, 517 to 539, 540 to 562, 680 to 701, 703 to 725, 726 to 748, 750 to 771, 773 to 795, 796 to 818, 820 to 841, 843 to 865, 866 to 888, and 890 to 911; these read KLRV…SGLQ, GLHV…FFKN, QLQS…EKLS, MLRC…IVET, ELRI…IADV, NLNK…EKLT, HLEV…FGEM, YLHE…ISEL, NLKE…EKLT, NLEI…FENL, CLHK…ISEL, HLVI…FESM, and YLCE…PKQS. Residues 1162 to 1180 show a composition bias toward basic and acidic residues; the sequence is DEPRIGARITDEISEDQPH. A disordered region spans residues 1162–1201; sequence DEPRIGARITDEISEDQPHKNTIGPETQTPTQPTKATDTV. Residues 1185-1201 are compositionally biased toward polar residues; it reads GPETQTPTQPTKATDTV.

This sequence belongs to the disease resistance NB-LRR family.

Potential disease resistance protein. In Arabidopsis thaliana (Mouse-ear cress), this protein is Putative disease resistance protein At4g19050.